The chain runs to 364 residues: DNA polymerase IV (364 aa).

In terms of domain architecture, UmuC spans 14-198; that stretch reads IIHIDMDAFF…LPIEKFHGVG (185 aa). The Mg(2+) site is built by aspartate 18 and aspartate 116. Glutamate 117 is an active-site residue.

Belongs to the DNA polymerase type-Y family. Monomer. The cofactor is Mg(2+).

It is found in the cytoplasm. The catalysed reaction is DNA(n) + a 2'-deoxyribonucleoside 5'-triphosphate = DNA(n+1) + diphosphate. Functionally, poorly processive, error-prone DNA polymerase involved in untargeted mutagenesis. Copies undamaged DNA at stalled replication forks, which arise in vivo from mismatched or misaligned primer ends. These misaligned primers can be extended by PolIV. Exhibits no 3'-5' exonuclease (proofreading) activity. May be involved in translesional synthesis, in conjunction with the beta clamp from PolIII. The polypeptide is DNA polymerase IV (Streptococcus pyogenes serotype M1).